A 557-amino-acid polypeptide reads, in one-letter code: Protein NRT1/ PTR FAMILY 5.10 (557 aa).

A run of 2 helical transmembrane segments spans residues 49 to 67 (FAYY…GPLG) and 79 to 99 (AWSG…DSFL). A Phosphothreonine modification is found at Thr104. The next 10 membrane-spanning stretches (helical) occupy residues 105-125 (ILAA…SAMI), 144-164 (VITF…HKPC), 186-206 (SFFN…LWVL), 215-235 (WALG…VLLL), 320-340 (APIW…PTFF), 365-385 (FISL…IPIA), 401-421 (IGTG…VEMK), 443-463 (VWWL…AMVG), 479-499 (VGLA…SFMI), and 526-546 (YFYW…LYVA).

This sequence belongs to the major facilitator superfamily. Proton-dependent oligopeptide transporter (POT/PTR) (TC 2.A.17) family. In terms of tissue distribution, expressed in shoots, roots and stems. Detected in leaves, flowers and siliques.

Its subcellular location is the membrane. This Arabidopsis thaliana (Mouse-ear cress) protein is Protein NRT1/ PTR FAMILY 5.10 (NPF5.10).